Consider the following 426-residue polypeptide: Enolase (426 aa).

Q162 is a binding site for (2R)-2-phosphoglycerate. The Proton donor role is filled by E204. Mg(2+) contacts are provided by D241, E284, and D311. 4 residues coordinate (2R)-2-phosphoglycerate: K336, R365, S366, and K387. The active-site Proton acceptor is the K336.

Belongs to the enolase family. Component of the RNA degradosome, a multiprotein complex involved in RNA processing and mRNA degradation. Mg(2+) is required as a cofactor.

Its subcellular location is the cytoplasm. It localises to the secreted. The protein localises to the cell surface. The enzyme catalyses (2R)-2-phosphoglycerate = phosphoenolpyruvate + H2O. The protein operates within carbohydrate degradation; glycolysis; pyruvate from D-glyceraldehyde 3-phosphate: step 4/5. Its function is as follows. Catalyzes the reversible conversion of 2-phosphoglycerate (2-PG) into phosphoenolpyruvate (PEP). It is essential for the degradation of carbohydrates via glycolysis. This is Enolase from Hydrogenovibrio crunogenus (strain DSM 25203 / XCL-2) (Thiomicrospira crunogena).